The chain runs to 289 residues: UPF0276 protein BB1291 (289 aa).

The protein belongs to the UPF0276 family.

The sequence is that of UPF0276 protein BB1291 from Bordetella bronchiseptica (strain ATCC BAA-588 / NCTC 13252 / RB50) (Alcaligenes bronchisepticus).